The following is a 285-amino-acid chain: Eukaryotic translation initiation factor 2 subunit beta (285 aa).

The interval 30 to 69 (DAAVNGKENGSGDDLFAGLKKKKKKSKSVSADAEAEKEPT) is disordered. S40 carries the post-translational modification Phosphoserine. At T69 the chain carries Phosphothreonine. Residues S80, S92, and S112 each carry the phosphoserine modification. T116 bears the Phosphothreonine mark. Phosphoserine is present on S118. The C4-type zinc-finger motif lies at 236 to 262 (CKTCKSINTELKREQSNRLFFMVCKSC).

This sequence belongs to the eIF-2-beta/eIF-5 family. In terms of assembly, eukaryotic translation initiation factor 2 eIF2 is a heterotrimeric complex composed of an alpha, a beta and a gamma subunit. The factors eIF-1, eIF-2, eIF-3, TIF5/eIF-5 and methionyl-tRNAi form a multifactor complex (MFC) that may bind to the 40S ribosome. Interacts with GCD6. Interacts with GCD1. Interacts with TIF5/eIF-5. Interacts with CDC123.

It is found in the cytoplasm. Its subcellular location is the cytosol. In terms of biological role, component of the eIF2 complex that functions in the early steps of protein synthesis by forming a ternary complex with GTP and initiator tRNA. This complex binds to a 40S ribosomal subunit, followed by mRNA binding to form a 43S pre-initiation complex (43S PIC). Junction of the 60S ribosomal subunit to form the 80S initiation complex is preceded by hydrolysis of the GTP bound to eIF2 and release of an eIF2-GDP binary complex. In order for eIF2 to recycle and catalyze another round of initiation, the GDP bound to eIF2 must exchange with GTP by way of a reaction catalyzed by eIF2B. This Saccharomyces cerevisiae (strain ATCC 204508 / S288c) (Baker's yeast) protein is Eukaryotic translation initiation factor 2 subunit beta (SUI3).